A 185-amino-acid chain; its full sequence is MDNLQQVVSALQSGEVIAYPTEGVFGVGCDPDNPQAVEKLLALKQRPIEKGLILIAANYQQLQPYIDDAQLSDLQKQKIFSTWPGPVTWVMPVKKDISPLLTGKFTSIAVRVSDHPLVQKLCHQFGKPITSTSANLTGLPPCKTVTEVQNQLGEHLSAILEGETGGRENPTEIRDAFSDTVLRQG.

In terms of domain architecture, YrdC-like spans 1 to 185 (MDNLQQVVSA…AFSDTVLRQG (185 aa)).

The protein belongs to the SUA5 family. TsaC subfamily.

It localises to the cytoplasm. It catalyses the reaction L-threonine + hydrogencarbonate + ATP = L-threonylcarbamoyladenylate + diphosphate + H2O. Required for the formation of a threonylcarbamoyl group on adenosine at position 37 (t(6)A37) in tRNAs that read codons beginning with adenine. Catalyzes the conversion of L-threonine, HCO(3)(-)/CO(2) and ATP to give threonylcarbamoyl-AMP (TC-AMP) as the acyladenylate intermediate, with the release of diphosphate. This Photobacterium profundum (strain SS9) protein is Threonylcarbamoyl-AMP synthase.